Here is a 299-residue protein sequence, read N- to C-terminus: Sulfate adenylyltransferase subunit 2 (299 aa).

It belongs to the PAPS reductase family. CysD subfamily. Sulfate-activating enzymes, NodP and NodQ, may be physically associated.

It catalyses the reaction sulfate + ATP + H(+) = adenosine 5'-phosphosulfate + diphosphate. In terms of biological role, proposed to provide activated sulfate for transfer to nod factor. The polypeptide is Sulfate adenylyltransferase subunit 2 (nodP) (Rhizobium meliloti (strain 1021) (Ensifer meliloti)).